The sequence spans 307 residues: MNAKVWVLGDAVVDLLPESEGRLLQCPGGAPANVAVGVARLGGNSGFIGAVGGDPFGRYMRHTLQQEQVDVSHMYLDDQHRTSTVVVDLDDQGERTFTFMVRPSADLFLVEEDLPQFAAGQWLHVCSIALSAEPSRSTTFAAMESIRSAGGRVSFDPNIRPDLWQDQALLLACLDRALHMANVVKLSEEELVFISSSNDLAYGIASVTERYQPELLLVTRGKAGVLAAFQQKFTHFNARPVASVDTTGAGDAFVAGLLASLAANGMPTDMTALEPTLTLAQTCGALATTAKGAMTALPYQRDLNRQF.

The protein belongs to the carbohydrate kinase PfkB family.

It catalyses the reaction D-fructose + ATP = D-fructose 6-phosphate + ADP + H(+). The polypeptide is Fructokinase (scrK) (Salmonella typhimurium).